We begin with the raw amino-acid sequence, 49 residues long: Large ribosomal subunit protein bL33 (49 aa).

Belongs to the bacterial ribosomal protein bL33 family.

The sequence is that of Large ribosomal subunit protein bL33 from Clostridium botulinum (strain Alaska E43 / Type E3).